Consider the following 235-residue polypeptide: 2-C-methyl-D-erythritol 4-phosphate cytidylyltransferase (235 aa).

The protein belongs to the IspD/TarI cytidylyltransferase family. IspD subfamily.

It catalyses the reaction 2-C-methyl-D-erythritol 4-phosphate + CTP + H(+) = 4-CDP-2-C-methyl-D-erythritol + diphosphate. It functions in the pathway isoprenoid biosynthesis; isopentenyl diphosphate biosynthesis via DXP pathway; isopentenyl diphosphate from 1-deoxy-D-xylulose 5-phosphate: step 2/6. Its function is as follows. Catalyzes the formation of 4-diphosphocytidyl-2-C-methyl-D-erythritol from CTP and 2-C-methyl-D-erythritol 4-phosphate (MEP). This is 2-C-methyl-D-erythritol 4-phosphate cytidylyltransferase from Pseudomonas entomophila (strain L48).